Here is a 352-residue protein sequence, read N- to C-terminus: Probable dual-specificity RNA methyltransferase RlmN (352 aa).

The active-site Proton acceptor is Glu-93. In terms of domain architecture, Radical SAM core spans 99–332; it reads TAKRLTVCVS…ATVRQTRGLD (234 aa). Cys-106 and Cys-337 are joined by a disulfide. Cys-113, Cys-117, and Cys-120 together coordinate [4Fe-4S] cluster. S-adenosyl-L-methionine contacts are provided by residues 160–161, Ser-190, 213–215, and Asn-294; these read GE and SLH. The S-methylcysteine intermediate role is filled by Cys-337.

The protein belongs to the radical SAM superfamily. RlmN family. It depends on [4Fe-4S] cluster as a cofactor.

The protein localises to the cytoplasm. The enzyme catalyses adenosine(2503) in 23S rRNA + 2 reduced [2Fe-2S]-[ferredoxin] + 2 S-adenosyl-L-methionine = 2-methyladenosine(2503) in 23S rRNA + 5'-deoxyadenosine + L-methionine + 2 oxidized [2Fe-2S]-[ferredoxin] + S-adenosyl-L-homocysteine. It catalyses the reaction adenosine(37) in tRNA + 2 reduced [2Fe-2S]-[ferredoxin] + 2 S-adenosyl-L-methionine = 2-methyladenosine(37) in tRNA + 5'-deoxyadenosine + L-methionine + 2 oxidized [2Fe-2S]-[ferredoxin] + S-adenosyl-L-homocysteine. Its function is as follows. Specifically methylates position 2 of adenine 2503 in 23S rRNA and position 2 of adenine 37 in tRNAs. The protein is Probable dual-specificity RNA methyltransferase RlmN of Synechococcus sp. (strain JA-2-3B'a(2-13)) (Cyanobacteria bacterium Yellowstone B-Prime).